A 667-amino-acid chain; its full sequence is Flavin-dependent halogenase malA (667 aa).

The FAD site is built by His-48, Glu-70, Ile-79, and Ser-82. Lys-108 is a catalytic residue. FAD-binding residues include Arg-144, Val-168, Asp-399, and Ile-412. Glu-494 is a binding site for substrate. Positions 597, 600, 613, and 616 each coordinate Zn(2+). The tract at residues 621 to 646 (TEPQTAVTFDPPLTAEEEALLYAAWN) is flexible region.

Belongs to the flavin-dependent halogenase family. Zn(2+) is required as a cofactor.

It catalyses the reaction (+)-premalbrancheamide + 2 FAD + 2 chloride + 4 H(+) = (+)-malbrancheamide + 2 FADH2. It carries out the reaction (+)-premalbrancheamide + FAD + chloride + 2 H(+) = (+)-malbrancheamide B + FADH2. The enzyme catalyses (+)-premalbrancheamide + FAD + chloride + 2 H(+) = (+)-isomalbrancheamide B + FADH2. The catalysed reaction is (+)-malbrancheamide B + FAD + chloride + 2 H(+) = (+)-malbrancheamide + FADH2. It catalyses the reaction (+)-isomalbrancheamide B + FAD + chloride + 2 H(+) = (+)-malbrancheamide + FADH2. It carries out the reaction (+)-premalbrancheamide + bromide + FAD + 2 H(+) = (+)-malbrancheamide C + FADH2. The enzyme catalyses (+)-premalbrancheamide + bromide + FAD + 2 H(+) = (+)-isomalbrancheamide C + FADH2. The catalysed reaction is (+)-malbrancheamide B + bromide + FAD + 2 H(+) = (+)-malbrancheamide D + FADH2. It catalyses the reaction (+)-isomalbrancheamide B + bromide + FAD + 2 H(+) = (+)-isomalbrancheamide D + FADH2. Its pathway is alkaloid biosynthesis. In terms of biological role, flavin-dependent halogenase; part of the gene cluster that mediates the biosynthesis of malbrancheamide, a dichlorinated fungal indole alkaloid that belongs to a family of natural products containing a characteristic bicyclo[2.2.2]diazaoctane core. The first step of malbrancheamide biosynthesis involves coupling of L-proline and L-tryptophan by malG, a bimodular NRPS, to produce L-Pro-L-Trp aldehyde through reductive offloading. This compound undergoes spontaneous cyclization and dehydration to give a dienamine which is reverse prenylated at C-2 by malE. The other prenyltransferase present in the cluster, malB, displays modest activity, suggesting that may be a redundant gene in the pathway. Subsequently, a [4+2] Diels-Alder cyclo-addition catalyzed by the bifunctional enzyme malC forms the characteristic bicyclo[2.2.2]diazaoctane ring of premalbrancheamid. Finally, the flavin-dependent halogenase malA catalyzes the iterative dichlorination of the indole ring of premalbrancheamide to yield C-9 monochlorinated malbrancheamide B, C-8 monochlorinated isomalbrancheamide B, and dichlorinated malbrancheamide. MalA is also able to brominate premalbrancheamide at C-9 to yield malbrancheamide C, and, to a lesser extend, at C-8 to yield isomalbrancheamide C. Finally, malA can brominate C-9 monochlorinated malbrancheamide B at C-8 to yield malbrancheamide D, or C-8 monochlorinated isomalbrancheamide B at C-9 to produce isomalbrancheamide D. The chain is Flavin-dependent halogenase malA from Malbranchea aurantiaca.